We begin with the raw amino-acid sequence, 1238 residues long: DNA-directed RNA polymerase subunit beta (1238 aa).

This sequence belongs to the RNA polymerase beta chain family. The RNAP catalytic core consists of 2 alpha, 1 beta, 1 beta' and 1 omega subunit. When a sigma factor is associated with the core the holoenzyme is formed, which can initiate transcription.

The catalysed reaction is RNA(n) + a ribonucleoside 5'-triphosphate = RNA(n+1) + diphosphate. Its function is as follows. DNA-dependent RNA polymerase catalyzes the transcription of DNA into RNA using the four ribonucleoside triphosphates as substrates. This Clostridioides difficile (strain 630) (Peptoclostridium difficile) protein is DNA-directed RNA polymerase subunit beta.